We begin with the raw amino-acid sequence, 147 residues long: Large ribosomal subunit protein bL9 (147 aa).

The protein belongs to the bacterial ribosomal protein bL9 family.

Functionally, binds to the 23S rRNA. The chain is Large ribosomal subunit protein bL9 from Campylobacter hominis (strain ATCC BAA-381 / DSM 21671 / CCUG 45161 / LMG 19568 / NCTC 13146 / CH001A).